The sequence spans 65 residues: Toxin Cbo5 (65 aa).

The LCN-type CS-alpha/beta domain occupies 2-65 (KDGYLVDKTG…QTWPLPNKSC (64 aa)). Cystine bridges form between C12–C65, C16–C41, C25–C46, and C29–C48.

It belongs to the long (4 C-C) scorpion toxin superfamily. Sodium channel inhibitor family. Beta subfamily. In terms of tissue distribution, expressed by the venom gland.

The protein resides in the secreted. Its function is as follows. A probable toxin that has no activity on the tested sodium channels (when tested at 200 nM) and is not toxic to mice, crickets or sweet water shrimps. It resembles Beta toxins that bind voltage-independently at site-4 of sodium channels and shift the voltage of activation toward more negative potentials, thereby affecting sodium channel activation and promoting spontaneous and repetitive firing. The protein is Toxin Cbo5 of Centruroides bonito (Scorpion).